Here is a 298-residue protein sequence, read N- to C-terminus: Small ribosomal subunit protein uS2 (298 aa).

This sequence belongs to the universal ribosomal protein uS2 family.

In Leifsonia xyli subsp. xyli (strain CTCB07), this protein is Small ribosomal subunit protein uS2.